Here is a 211-residue protein sequence, read N- to C-terminus: MAKPKKENDLDLLIQLADALEAIPGDLSKNFTEVRFLEAELKDVYSQALSSIDDLLNRDTSVERRNLVARNLSLLLKSDDVQTRKKSHIAMYAEAITHSNVLRLEHCYQKMEMKLPNFFIPFTPEVIKEQKTSRPIRASRRRANLRNRRAKELLAAENASEEGDKKQIITDSGKLPETEELTETTNEDLDIKQFSPYSSESSANVSSYNKS.

The disordered stretch occupies residues 155-211 (AAENASEEGDKKQIITDSGKLPETEELTETTNEDLDIKQFSPYSSESSANVSSYNKS). Residues 178-188 (TEELTETTNED) are compositionally biased toward acidic residues. The span at 195–211 (SPYSSESSANVSSYNKS) shows a compositional bias: low complexity.

This is an uncharacterized protein from Schizosaccharomyces pombe (strain 972 / ATCC 24843) (Fission yeast).